We begin with the raw amino-acid sequence, 449 residues long: Phosphoglucosamine mutase (449 aa).

Serine 100 acts as the Phosphoserine intermediate in catalysis. Residues serine 100, aspartate 241, aspartate 243, and aspartate 245 each coordinate Mg(2+). Serine 100 carries the phosphoserine modification.

Belongs to the phosphohexose mutase family. Mg(2+) is required as a cofactor. In terms of processing, activated by phosphorylation.

The catalysed reaction is alpha-D-glucosamine 1-phosphate = D-glucosamine 6-phosphate. In terms of biological role, catalyzes the conversion of glucosamine-6-phosphate to glucosamine-1-phosphate. The protein is Phosphoglucosamine mutase of Clostridium botulinum (strain Langeland / NCTC 10281 / Type F).